The chain runs to 165 residues: Neurotrophin-3 (165 aa).

The N-terminal stretch at 1 to 3 (IQS) is a signal peptide. The propeptide occupies 4 to 119 (TSMDQGSLSE…VLNQTSRRKR (116 aa)). Asparagine 112 carries N-linked (GlcNAc...) asparagine glycosylation.

The protein belongs to the NGF-beta family.

It is found in the secreted. In terms of biological role, seems to promote the survival of visceral and proprioceptive sensory neurons. The protein is Neurotrophin-3 (NTF3) of Aspidites melanocephalus (Black-headed python).